A 501-amino-acid chain; its full sequence is ATP synthase subunit alpha (501 aa).

Residue 169–176 (GDRQTGKT) coordinates ATP.

The protein belongs to the ATPase alpha/beta chains family. F-type ATPases have 2 components, CF(1) - the catalytic core - and CF(0) - the membrane proton channel. CF(1) has five subunits: alpha(3), beta(3), gamma(1), delta(1), epsilon(1). CF(0) has three main subunits: a(1), b(2) and c(9-12). The alpha and beta chains form an alternating ring which encloses part of the gamma chain. CF(1) is attached to CF(0) by a central stalk formed by the gamma and epsilon chains, while a peripheral stalk is formed by the delta and b chains.

It localises to the cell inner membrane. The enzyme catalyses ATP + H2O + 4 H(+)(in) = ADP + phosphate + 5 H(+)(out). Its function is as follows. Produces ATP from ADP in the presence of a proton gradient across the membrane. The alpha chain is a regulatory subunit. The protein is ATP synthase subunit alpha of Campylobacter jejuni subsp. jejuni serotype O:23/36 (strain 81-176).